Here is a 302-residue protein sequence, read N- to C-terminus: Mitochondrial adapter protein MCP1 (302 aa).

A disordered region spans residues 1–35 (MIKLHEVPPEPVDPASLPHDVNAHSPEGDGNPDKR). Residues 1–61 (MIKLHEVPPE…RFLWNCQKIS (61 aa)) lie on the Cytoplasmic side of the membrane. The PxP motif lies at 4-12 (LHEVPPEPV). Residues 62–82 (VLPMALYFPLHAANTLITPAV) form a helical membrane-spanning segment. The Mitochondrial intermembrane segment spans residues 83–100 (SPDSAPDDVLMMVREILP). A helical transmembrane segment spans residues 101-121 (SITTKLLVAGITLHVSAGVLL). The Cytoplasmic segment spans residues 122-173 (RIVNNWNKPRRNRHRHLKISAEQDLSQDSIGLTGGISGYLFGLYKTFRIPPQ). The chain crosses the membrane as a helical span at residues 174-194 (VISGYILVPVLIYHLLIMKWV). Topologically, residues 195-219 (PNSISTEVDFASIKQLLSSKNRWWK) are mitochondrial intermembrane. The chain crosses the membrane as a helical span at residues 220–240 (WLGGLVPLAILLESGVYHIGS). Residues 241 to 258 (GLCRYFGVRKMTSRKKWS) lie on the Cytoplasmic side of the membrane. Residues 259-276 (TAINLLTLVGFVSLIRLM) traverse the membrane as a helical segment. Residues 277–302 (KEDSTKLGPNQFESIFKKIRLLLHVN) are Mitochondrial intermembrane-facing.

Interacts (via PxP motif) with VPS13 (via SHR-BD domain).

The protein localises to the mitochondrion outer membrane. Recruits the lipid transfer protein Vps13 to mitochondria thereby promoting vacuole-mitochondria contacts. Involved in mitochondrial lipid homeostasis. This is Mitochondrial adapter protein MCP1 from Saccharomyces cerevisiae (strain ATCC 204508 / S288c) (Baker's yeast).